A 318-amino-acid polypeptide reads, in one-letter code: Protoheme IX farnesyltransferase (318 aa).

The next 9 helical transmembrane spans lie at 34 to 54 (VMSLVVFTAFAGLVLAPGQIN), 55 to 75 (PVIGFIAILCIAIGAGASGAL), 95 to 115 (IPAGKILPQEALAFGLTLSAF), 118 to 138 (IILGLAVNWLAAGLLAFTIFF), 155 to 175 (IVIGGAAGAFPPMIGWACVTG), 182 to 202 (IVLFLIIFLWTPAHFWALALF), 228 to 250 (IVVYALLTALSGICPTLLGFASL), 254 to 273 (AFATALGLGFIWYSLAVLRM), and 287 to 307 (FAFSIAYLFAIFSALLVDYMI).

It belongs to the UbiA prenyltransferase family. Protoheme IX farnesyltransferase subfamily.

The protein localises to the cell inner membrane. The enzyme catalyses heme b + (2E,6E)-farnesyl diphosphate + H2O = Fe(II)-heme o + diphosphate. The protein operates within porphyrin-containing compound metabolism; heme O biosynthesis; heme O from protoheme: step 1/1. Functionally, converts heme B (protoheme IX) to heme O by substitution of the vinyl group on carbon 2 of heme B porphyrin ring with a hydroxyethyl farnesyl side group. This chain is Protoheme IX farnesyltransferase, found in Sinorhizobium fredii (strain NBRC 101917 / NGR234).